We begin with the raw amino-acid sequence, 605 residues long: Copper resistance protein A (605 aa).

A signal peptide (tat-type signal) is located at residues 1–41 (MLLKTSRRTFLKGLTLSGVAGSLGVWSFNARSSLSLPVAAS). The Cu cation site is built by His-100, His-102, His-142, and His-144. Repeat copies occupy residues 382–389 (DHSQMGGM), 414–421 (DHSSMAGM), and 422–429 (DHSRMAGM). The interval 382–429 (DHSQMGGMDNSGEMMSMDGADLPDSGTSSAPMDHSSMAGMDHSRMAGM) is 3 X 8 AA tandem repeats of D-H-X-X-M-X-G-M. Cu cation-binding residues include His-538, His-541, His-543, His-586, Cys-587, His-588, His-592, and Met-597.

The protein belongs to the multicopper oxidase family. CopA subfamily. Post-translationally, predicted to be exported by the Tat system. The position of the signal peptide cleavage has not been experimentally proven.

The protein resides in the periplasm. Functionally, required for the copper-inducible expression of copper resistance. May have oxidase activity. The protein is Copper resistance protein A (pcoA) of Escherichia coli.